The sequence spans 553 residues: Membrane protein insertase YidC (553 aa).

The next 5 membrane-spanning stretches (helical) occupy residues 7–24 (VLWV…DNWQ), 365–385 (WGWA…PLSA), 435–455 (LPVV…LASV), 474–494 (PFFI…SLNP), and 509–529 (PIAF…YYVV).

It belongs to the OXA1/ALB3/YidC family. Type 1 subfamily. Interacts with the Sec translocase complex via SecD. Specifically interacts with transmembrane segments of nascent integral membrane proteins during membrane integration.

It localises to the cell inner membrane. Required for the insertion and/or proper folding and/or complex formation of integral membrane proteins into the membrane. Involved in integration of membrane proteins that insert both dependently and independently of the Sec translocase complex, as well as at least some lipoproteins. Aids folding of multispanning membrane proteins. The sequence is that of Membrane protein insertase YidC from Burkholderia orbicola (strain MC0-3).